A 540-amino-acid chain; its full sequence is Serine/threonine-protein phosphatase ppzA (540 aa).

2 disordered regions span residues M1 to H108 and V120 to K140. 2 stretches are compositionally biased toward polar residues: residues S15–R24 and S45–G54. The span at A62–Q88 shows a compositional bias: low complexity. Over residues P89–P98 the composition is skewed to pro residues. Residues P127–P136 show a composition bias toward low complexity. Mn(2+) contacts are provided by D239, H241, D267, and N299. The region spanning P258–R540 is the Phosphatase tensin-type domain. The active-site Proton donor is H300. H348 and H423 together coordinate Mn(2+).

This sequence belongs to the PPP phosphatase family. PP-Z subfamily. Interacts with at least 54 proteins, of which 31 are detected only after iron starvation and 22 are detected only in control conditions. Only the regulatory subunit of the protein phosphatase PP1 (Afu1g04800/AFUB_005140) interacts with ppzA in both conditions. It depends on Mn(2+) as a cofactor.

Its subcellular location is the cytoplasm. It catalyses the reaction O-phospho-L-seryl-[protein] + H2O = L-seryl-[protein] + phosphate. The enzyme catalyses O-phospho-L-threonyl-[protein] + H2O = L-threonyl-[protein] + phosphate. Its function is as follows. Catalytic subunit of protein phosphatase Z (PPZ) involved in iron assimilation. Regulates secondary metabolites production, including gliotoxin, pyripyropene A, fumagillin, fumiquinazoline A, triacetyl-fusarinine C, and helvolic acid. Plays a key role in pathogenicity. This is Serine/threonine-protein phosphatase ppzA from Aspergillus fumigatus (strain CBS 144.89 / FGSC A1163 / CEA10) (Neosartorya fumigata).